Here is a 166-residue protein sequence, read N- to C-terminus: Phosphopantetheine adenylyltransferase (166 aa).

Position 10 (threonine 10) interacts with substrate. Residues 10 to 11 (TF) and histidine 18 each bind ATP. The substrate site is built by lysine 42, leucine 75, and arginine 89. ATP contacts are provided by residues 90 to 92 (GVR), glutamate 100, and 125 to 131 (YTYVAST).

It belongs to the bacterial CoaD family. Homohexamer. Mg(2+) is required as a cofactor.

The protein resides in the cytoplasm. It carries out the reaction (R)-4'-phosphopantetheine + ATP + H(+) = 3'-dephospho-CoA + diphosphate. The protein operates within cofactor biosynthesis; coenzyme A biosynthesis; CoA from (R)-pantothenate: step 4/5. Functionally, reversibly transfers an adenylyl group from ATP to 4'-phosphopantetheine, yielding dephospho-CoA (dPCoA) and pyrophosphate. This Chlorobaculum parvum (strain DSM 263 / NCIMB 8327) (Chlorobium vibrioforme subsp. thiosulfatophilum) protein is Phosphopantetheine adenylyltransferase.